An 833-amino-acid polypeptide reads, in one-letter code: Major vault protein (833 aa).

MVP repeat units lie at residues 54 to 118 (RHYC…QLIP), 119 to 170 (PNTG…TVIY), 171 to 223 (PNTA…TMLS), 224 to 278 (DLKA…VSLS), 280 to 328 (KEYV…LVVG), 329 to 380 (KEEA…MALD), and 381 to 433 (KNEG…SIQT).

In terms of assembly, the vault ribonucleoprotein particle is a huge (400 A x 670 A) cage structure of 12.9 MDa. It consists of a dimer of half-vaults, with each half-vault comprising 39 identical major vault protein (MVP) chains, PARP4 and one or more vault RNAs (vRNAs).

The protein resides in the cytoplasm. Its subcellular location is the nucleus. In terms of biological role, required for normal vault structure. Vaults are multi-subunit structures that may act as scaffolds for proteins involved in signal transduction. Vaults may also play a role in nucleo-cytoplasmic transport. The chain is Major vault protein from Leishmania infantum.